Consider the following 490-residue polypeptide: Protein U94 (490 aa).

The 210-residue stretch at 1–210 folds into the PV NS1-Nuc domain; that stretch reads MFSIINPSDD…SHFNKKPNVK (210 aa). Residues 312 to 463 enclose the SF3 helicase domain; it reads DPILAGTILY…IPRNFPVIQK (152 aa). Residue 338–345 coordinates ATP; sequence GPPGCGKS.

Its subcellular location is the host nucleus. The polypeptide is Protein U94 (U94) (Human herpesvirus 6B (HHV-6 variant B)).